The primary structure comprises 300 residues: Porphobilinogen deaminase (300 aa).

Cys239 is subject to S-(dipyrrolylmethanemethyl)cysteine.

Belongs to the HMBS family. In terms of assembly, monomer. It depends on dipyrromethane as a cofactor.

The catalysed reaction is 4 porphobilinogen + H2O = hydroxymethylbilane + 4 NH4(+). It functions in the pathway porphyrin-containing compound metabolism; protoporphyrin-IX biosynthesis; coproporphyrinogen-III from 5-aminolevulinate: step 2/4. Functionally, tetrapolymerization of the monopyrrole PBG into the hydroxymethylbilane pre-uroporphyrinogen in several discrete steps. The chain is Porphobilinogen deaminase from Francisella tularensis subsp. holarctica (strain FTNF002-00 / FTA).